A 506-amino-acid chain; its full sequence is Proline--tRNA ligase (506 aa).

The protein belongs to the class-II aminoacyl-tRNA synthetase family. ProS type 3 subfamily. In terms of assembly, homodimer.

It is found in the cytoplasm. It carries out the reaction tRNA(Pro) + L-proline + ATP = L-prolyl-tRNA(Pro) + AMP + diphosphate. In terms of biological role, catalyzes the attachment of proline to tRNA(Pro) in a two-step reaction: proline is first activated by ATP to form Pro-AMP and then transferred to the acceptor end of tRNA(Pro). This chain is Proline--tRNA ligase, found in Akkermansia muciniphila (strain ATCC BAA-835 / DSM 22959 / JCM 33894 / BCRC 81048 / CCUG 64013 / CIP 107961 / Muc).